A 189-amino-acid chain; its full sequence is PTS system glucose-specific EIIA component (189 aa).

The PTS EIIA type-1 domain maps to 31–135 (DEAFAEKIVG…SVITPVVIAN (105 aa)). 2 residues coordinate Zn(2+): H68 and H83. H83 serves as the catalytic Tele-phosphohistidine intermediate; for EIIA activity. Residue H83 is modified to Phosphohistidine; by HPr.

In terms of assembly, heterodimer with glycerol kinase (glpk). Zn(2+) serves as cofactor.

It is found in the cytoplasm. Its function is as follows. The phosphoenolpyruvate-dependent sugar phosphotransferase system (sugar PTS), a major carbohydrate active transport system, catalyzes the phosphorylation of incoming sugar substrates concomitantly with their translocation across the cell membrane. The enzyme II complex composed of PtsG and Crr is involved in glucose transport. The chain is PTS system glucose-specific EIIA component (crr) from Borreliella burgdorferi (strain ATCC 35210 / DSM 4680 / CIP 102532 / B31) (Borrelia burgdorferi).